The sequence spans 70 residues: ATP synthase subunit c (70 aa).

Transmembrane regions (helical) follow at residues 4–24 (IAAG…DGIV) and 47–67 (FIGV…ALMV).

This sequence belongs to the ATPase C chain family. F-type ATPases have 2 components, F(1) - the catalytic core - and F(0) - the membrane proton channel. F(1) has five subunits: alpha(3), beta(3), gamma(1), delta(1), epsilon(1). F(0) has three main subunits: a(1), b(2) and c(10-14). The alpha and beta chains form an alternating ring which encloses part of the gamma chain. F(1) is attached to F(0) by a central stalk formed by the gamma and epsilon chains, while a peripheral stalk is formed by the delta and b chains.

The protein localises to the cell membrane. In terms of biological role, f(1)F(0) ATP synthase produces ATP from ADP in the presence of a proton or sodium gradient. F-type ATPases consist of two structural domains, F(1) containing the extramembraneous catalytic core and F(0) containing the membrane proton channel, linked together by a central stalk and a peripheral stalk. During catalysis, ATP synthesis in the catalytic domain of F(1) is coupled via a rotary mechanism of the central stalk subunits to proton translocation. Functionally, key component of the F(0) channel; it plays a direct role in translocation across the membrane. A homomeric c-ring of between 10-14 subunits forms the central stalk rotor element with the F(1) delta and epsilon subunits. This Levilactobacillus brevis (strain ATCC 367 / BCRC 12310 / CIP 105137 / JCM 1170 / LMG 11437 / NCIMB 947 / NCTC 947) (Lactobacillus brevis) protein is ATP synthase subunit c.